A 217-amino-acid polypeptide reads, in one-letter code: Small ribosomal subunit protein uS3 (217 aa).

One can recognise a KH type-2 domain in the interval Ile38–Lys106.

The protein belongs to the universal ribosomal protein uS3 family. As to quaternary structure, part of the 30S ribosomal subunit. Forms a tight complex with proteins S10 and S14.

Binds the lower part of the 30S subunit head. Binds mRNA in the 70S ribosome, positioning it for translation. This chain is Small ribosomal subunit protein uS3, found in Streptococcus equi subsp. equi (strain 4047).